The following is a 231-amino-acid chain: Putative cobalt transport protein CbiM 1 (231 aa).

A run of 6 helical transmembrane segments spans residues 9–29, 41–61, 74–94, 107–127, 135–155, and 181–201; these read PGPW…YGIF, VLPL…LKLP, GMAV…IVLL, TFGA…YAIY, VNFY…TYVV, and VFAI…TLLF.

It belongs to the CbiM family. As to quaternary structure, forms an energy-coupling factor (ECF) transporter complex composed of an ATP-binding protein (A component, CbiO), a transmembrane protein (T component, CbiQ) and 2 possible substrate-capture proteins (S components, CbiM and CbiN) of unknown stoichimetry.

The protein localises to the cell membrane. It functions in the pathway cofactor biosynthesis; adenosylcobalamin biosynthesis. Functionally, part of the energy-coupling factor (ECF) transporter complex CbiMNOQ involved in cobalt import. The protein is Putative cobalt transport protein CbiM 1 of Methanosarcina barkeri (strain Fusaro / DSM 804).